A 339-amino-acid polypeptide reads, in one-letter code: RNA 3'-terminal phosphate cyclase (339 aa).

ATP contacts are provided by residues Gln-103 and 283–287 (HLADQ). His-308 acts as the Tele-AMP-histidine intermediate in catalysis.

The protein belongs to the RNA 3'-terminal cyclase family. Type 1 subfamily.

It localises to the cytoplasm. The enzyme catalyses a 3'-end 3'-phospho-ribonucleotide-RNA + ATP = a 3'-end 2',3'-cyclophospho-ribonucleotide-RNA + AMP + diphosphate. Catalyzes the conversion of 3'-phosphate to a 2',3'-cyclic phosphodiester at the end of RNA. The mechanism of action of the enzyme occurs in 3 steps: (A) adenylation of the enzyme by ATP; (B) transfer of adenylate to an RNA-N3'P to produce RNA-N3'PP5'A; (C) and attack of the adjacent 2'-hydroxyl on the 3'-phosphorus in the diester linkage to produce the cyclic end product. The biological role of this enzyme is unknown but it is likely to function in some aspects of cellular RNA processing. This is RNA 3'-terminal phosphate cyclase from Salmonella enteritidis PT4 (strain P125109).